The primary structure comprises 225 residues: Transcription factor HES-7 (225 aa).

In terms of domain architecture, bHLH spans 12-69 (GPKMLKPLVEKRRRDRINRSLEELRLLLLERTRDQNLRNPKLEKAEILEFAVGYLRER). The Orange domain maps to 92-122 (YLSGFRECLLRLAAFAHDASPAARSQLFSAL). A disordered region spans residues 124–225 (GYRRPKPPRP…PPPAFWRPWP (102 aa)). 2 stretches are compositionally biased toward pro residues: residues 140 to 149 (LPAPRPPLDP) and 213 to 225 (PSLPPPAFWRPWP). Residues 221–224 (WRPW) carry the WRPW motif motif.

In terms of assembly, transcription repression requires formation of a complex with a corepressor protein of the Groucho/TLE family.

Its subcellular location is the nucleus. Transcriptional repressor. Represses transcription from both N box- and E box-containing promoters. May with HES1, cooperatively regulate somite formation in the presomitic mesoderm (PSM). May function as a segmentation clock, which is essential for coordinated somite segmentation. The chain is Transcription factor HES-7 (Hes7) from Mus musculus (Mouse).